The following is a 371-amino-acid chain: D-alanine--D-alanine ligase (371 aa).

The ATP-grasp domain maps to Lys154 to Asp361. Residue Arg182 to Glu237 coordinates ATP. Residues Asp316, Glu328, and Asn330 each contribute to the Mg(2+) site.

Belongs to the D-alanine--D-alanine ligase family. It depends on Mg(2+) as a cofactor. Mn(2+) serves as cofactor.

It is found in the cytoplasm. The catalysed reaction is 2 D-alanine + ATP = D-alanyl-D-alanine + ADP + phosphate + H(+). It participates in cell wall biogenesis; peptidoglycan biosynthesis. Functionally, cell wall formation. The sequence is that of D-alanine--D-alanine ligase from Mycobacterium sp. (strain KMS).